Reading from the N-terminus, the 271-residue chain is Formamidopyrimidine-DNA glycosylase (271 aa).

The Schiff-base intermediate with DNA role is filled by proline 2. Catalysis depends on glutamate 3, which acts as the Proton donor. Lysine 58 acts as the Proton donor; for beta-elimination activity in catalysis. DNA-binding residues include histidine 92, arginine 111, and arginine 152. Residues 237–271 (MVYGREGEACRHCGGELKHATIGQRATVWCAACQR) form an FPG-type zinc finger. Arginine 261 serves as the catalytic Proton donor; for delta-elimination activity.

Belongs to the FPG family. Monomer. The cofactor is Zn(2+).

It catalyses the reaction Hydrolysis of DNA containing ring-opened 7-methylguanine residues, releasing 2,6-diamino-4-hydroxy-5-(N-methyl)formamidopyrimidine.. The catalysed reaction is 2'-deoxyribonucleotide-(2'-deoxyribose 5'-phosphate)-2'-deoxyribonucleotide-DNA = a 3'-end 2'-deoxyribonucleotide-(2,3-dehydro-2,3-deoxyribose 5'-phosphate)-DNA + a 5'-end 5'-phospho-2'-deoxyribonucleoside-DNA + H(+). Its function is as follows. Involved in base excision repair of DNA damaged by oxidation or by mutagenic agents. Acts as a DNA glycosylase that recognizes and removes damaged bases. Has a preference for oxidized purines, such as 7,8-dihydro-8-oxoguanine (8-oxoG). Has AP (apurinic/apyrimidinic) lyase activity and introduces nicks in the DNA strand. Cleaves the DNA backbone by beta-delta elimination to generate a single-strand break at the site of the removed base with both 3'- and 5'-phosphates. The sequence is that of Formamidopyrimidine-DNA glycosylase from Xanthomonas campestris pv. campestris (strain ATCC 33913 / DSM 3586 / NCPPB 528 / LMG 568 / P 25).